We begin with the raw amino-acid sequence, 319 residues long: Cobalamin biosynthesis protein CobD (319 aa).

5 helical membrane passes run 56–76 (VMWLVVIGLTWGVAWGVLALA), 78–98 (GIHPWLGWLVEVWMIFTALAG), 153–173 (VDGIIAPLFFLLLGGAPLAMA), 204–224 (VANFLPARLSWLLLSLAAVLC), and 296–316 (LMWVASSLALALFIGVRYWLV).

Belongs to the CobD/CbiB family.

The protein localises to the cell membrane. It participates in cofactor biosynthesis; adenosylcobalamin biosynthesis. In terms of biological role, converts cobyric acid to cobinamide by the addition of aminopropanol on the F carboxylic group. This is Cobalamin biosynthesis protein CobD from Klebsiella pneumoniae subsp. pneumoniae (strain ATCC 700721 / MGH 78578).